The following is a 548-amino-acid chain: Membrane protein insertase YidC (548 aa).

Residues 6–26 traverse the membrane as a helical segment; that stretch reads NLFLIAFLFVSFMIWQAWQTD. The tract at residues 30 to 53 is disordered; the sequence is QPLQTQTTQNTTSAAGDAVNQGVP. A run of 4 helical transmembrane segments spans residues 345–365, 420–440, 458–478, and 499–519; these read KFLH…TFIV, LGGC…YYML, LAAQ…MFFI, and PVIF…YYIV.

It belongs to the OXA1/ALB3/YidC family. Type 1 subfamily. As to quaternary structure, interacts with the Sec translocase complex via SecD. Specifically interacts with transmembrane segments of nascent integral membrane proteins during membrane integration.

It localises to the cell inner membrane. Functionally, required for the insertion and/or proper folding and/or complex formation of integral membrane proteins into the membrane. Involved in integration of membrane proteins that insert both dependently and independently of the Sec translocase complex, as well as at least some lipoproteins. Aids folding of multispanning membrane proteins. In Erwinia tasmaniensis (strain DSM 17950 / CFBP 7177 / CIP 109463 / NCPPB 4357 / Et1/99), this protein is Membrane protein insertase YidC.